The chain runs to 669 residues: Acetyl-coenzyme A synthetase (669 aa).

CoA is bound by residues 211 to 214 (RGGK) and threonine 329. ATP is bound by residues 404 to 406 (GEP), 428 to 433 (DTYWQT), aspartate 519, and arginine 534. Position 542 (serine 542) interacts with CoA. Arginine 545 contributes to the ATP binding site. Arginine 602 contributes to the CoA binding site.

This sequence belongs to the ATP-dependent AMP-binding enzyme family.

The enzyme catalyses acetate + ATP + CoA = acetyl-CoA + AMP + diphosphate. The protein operates within ketone degradation; acetoin degradation. It participates in antibiotic biosynthesis; penicillin biosynthesis. The protein is Acetyl-coenzyme A synthetase (facA) of Penicillium chrysogenum (Penicillium notatum).